We begin with the raw amino-acid sequence, 72 residues long: Cell division protein ZapB (72 aa).

Positions 1–71 (MSLEILDQLE…LRSLLGRIDN (71 aa)) form a coiled coil. The segment at 36–56 (LSRQTNEQLRSENEHLKTEHH) is disordered. Over residues 44 to 56 (LRSENEHLKTEHH) the composition is skewed to basic and acidic residues.

This sequence belongs to the ZapB family. Homodimer. The ends of the coiled-coil dimer bind to each other, forming polymers. Interacts with FtsZ.

The protein resides in the cytoplasm. Non-essential, abundant cell division factor that is required for proper Z-ring formation. It is recruited early to the divisome by direct interaction with FtsZ, stimulating Z-ring assembly and thereby promoting cell division earlier in the cell cycle. Its recruitment to the Z-ring requires functional FtsA or ZipA. The polypeptide is Cell division protein ZapB (Histophilus somni (strain 129Pt) (Haemophilus somnus)).